Reading from the N-terminus, the 160-residue chain is Phosphopantetheine adenylyltransferase (160 aa).

T9 serves as a coordination point for substrate. ATP is bound by residues 9-10 (TF) and H17. Residues K41, L73, and R87 each coordinate substrate. ATP-binding positions include 88-90 (GLR), E98, and 123-129 (YSFLSSS).

This sequence belongs to the bacterial CoaD family. In terms of assembly, homohexamer. Mg(2+) is required as a cofactor.

It localises to the cytoplasm. It carries out the reaction (R)-4'-phosphopantetheine + ATP + H(+) = 3'-dephospho-CoA + diphosphate. Its pathway is cofactor biosynthesis; coenzyme A biosynthesis; CoA from (R)-pantothenate: step 4/5. Functionally, reversibly transfers an adenylyl group from ATP to 4'-phosphopantetheine, yielding dephospho-CoA (dPCoA) and pyrophosphate. This Moorella thermoacetica (strain ATCC 39073 / JCM 9320) protein is Phosphopantetheine adenylyltransferase.